Reading from the N-terminus, the 461-residue chain is MSVRIEHDTFGEIEVPADKYWGAQTERSKRNFPVGKERMPIEVVYGFAQLKRGAALANHALGKLSDAKKDAIVYACDRVLNKELDEHFPLVVWQTGSGTQSNMNVNEVVSYVANTYLKEQGIDESIHPNDDVNKSQSSNDTFPTAMHVALYNEVETKLEPALKTLRDTFKQKEEQYHDIIKIGRTHLQDATPIRLGQEISGWRYMLDKCETLLSESKAHILNLAIGGTAVGTGINAHPEFGDKVAKFIAENTGYPFVSSENKFHALTAHDEVVQLHGTLKALATDLMKIANDVRWLASGPRAGLAEISIPENEPGSSIMPGKVNPTQCEMLTMVAVQVMGNDTAVGIASSQGNFELNVYKPVILLNTLQSIYLLADGMDTFNNNCAVGIEPIPENIDNYLNQSLMLVTALNPHIGYEKAASIAKKAHREGLTLKESAIDSGYVTEEQFEQWIKPEDMVEPK.

Substrate contacts are provided by residues 97 to 99 (SGT), 127 to 130 (HPND), 137 to 139 (SSN), and Thr-185. The active-site Proton donor/acceptor is His-186. The active site involves Ser-316. Substrate is bound by residues Ser-317 and 322–324 (KVN).

It belongs to the class-II fumarase/aspartase family. Fumarase subfamily. In terms of assembly, homotetramer.

It is found in the cytoplasm. It carries out the reaction (S)-malate = fumarate + H2O. Its pathway is carbohydrate metabolism; tricarboxylic acid cycle; (S)-malate from fumarate: step 1/1. Its function is as follows. Involved in the TCA cycle. Catalyzes the stereospecific interconversion of fumarate to L-malate. The sequence is that of Fumarate hydratase class II from Staphylococcus saprophyticus subsp. saprophyticus (strain ATCC 15305 / DSM 20229 / NCIMB 8711 / NCTC 7292 / S-41).